The primary structure comprises 107 residues: Ig kappa chain V-VI region J539 (107 aa).

Residues 1-23 are framework-1; the sequence is EIVLTQSPAITAASLGQKVTITC. Cysteines 23 and 87 form a disulfide. Positions 24–33 are complementarity-determining-1; that stretch reads SASSSVSSLH. A framework-2 region spans residues 34–48; the sequence is WYQQKSGTSPKPWIY. The interval 49–55 is complementarity-determining-2; that stretch reads EISKLAS. The segment at 56 to 87 is framework-3; sequence GVPARFSGSGSGTSYSLTINTMEAEDAAIYYC. A complementarity-determining-3 region spans residues 88-96; the sequence is QQWTYPLIT. Positions 97 to 106 are framework-4; the sequence is FGAGTKLELK.

The protein is Ig kappa chain V-VI region J539 of Mus musculus (Mouse).